We begin with the raw amino-acid sequence, 452 residues long: Flavin-containing monooxygenase FMO GS-OX-like 4 (452 aa).

17 to 22 serves as a coordination point for FAD; that stretch reads GAGAAG. NADP(+) is bound at residue 217-222; sequence GNSASA.

It belongs to the FMO family. The cofactor is FAD.

Catalyzes the conversion of methylthioalkyl glucosinolates of any chain length into methylsulfinylalkyl glucosinolates. In Arabidopsis thaliana (Mouse-ear cress), this protein is Flavin-containing monooxygenase FMO GS-OX-like 4.